The primary structure comprises 680 residues: Pescadillo homolog (680 aa).

The interval 315 to 336 (GEDEKPKAITNGEGESETPTDA) is disordered. Residues 359-471 (DPSQLFANCT…ELKEPNQYAP (113 aa)) enclose the BRCT domain. Positions 494 to 680 (VPLEEQQTEA…ERKMAKGKAT (187 aa)) are disordered. Composition is skewed to acidic residues over residues 511-530 (DVEDEEEADGAEADEDDDEA), 543-556 (GSDDDDDEEDEEAD), and 565-576 (AEVDDASEDDEQ). 3 stretches are compositionally biased toward basic and acidic residues: residues 597–610 (KASEADKQAADPKS), 617–635 (RKELQRKAKEEAEDLERAK), and 654–664 (NKKDAESEKLR). Residues 609–680 (KSKAKQQKRK…ERKMAKGKAT (72 aa)) adopt a coiled-coil conformation. Positions 665 to 680 (EKRRRIERKMAKGKAT) are enriched in basic residues.

Belongs to the pescadillo family. As to quaternary structure, component of the NOP7 complex, composed of ERB1, NOP7 and YTM1. The complex is held together by ERB1, which interacts with NOP7 via its N-terminal domain and with YTM1 via a high-affinity interaction between the seven-bladed beta-propeller domains of the 2 proteins. The NOP7 complex associates with the 66S pre-ribosome.

Its subcellular location is the nucleus. The protein resides in the nucleolus. It localises to the nucleoplasm. Component of the NOP7 complex, which is required for maturation of the 25S and 5.8S ribosomal RNAs and formation of the 60S ribosome. The protein is Pescadillo homolog of Pyricularia oryzae (strain 70-15 / ATCC MYA-4617 / FGSC 8958) (Rice blast fungus).